The chain runs to 695 residues: Variediene synthase (695 aa).

Residues methionine 1–glutamine 23 are disordered. Residues serine 7 to glutamate 332 are terpene cyclase. Residue aspartate 98 coordinates Mg(2+). Residues aspartate 98, arginine 184–aspartate 187, asparagine 228, serine 232–glutamate 236, and arginine 324–tyrosine 325 contribute to the substrate site. The short motif at aspartate 98–glutamate 102 is the DDXXD 1 element. The short motif at asparagine 228–glutamate 236 is the NSE/DTE element. The segment at arginine 353–proline 392 is disordered. The segment covering serine 357–serine 385 has biased composition (low complexity). Positions 415, 418, and 447 each coordinate isopentenyl diphosphate. Mg(2+) contacts are provided by aspartate 454 and aspartate 458. Residues aspartate 454–aspartate 458 carry the DDXXD 2 motif. Arginine 463 contacts dimethylallyl diphosphate. Position 464 (arginine 464) interacts with isopentenyl diphosphate. Residues lysine 541, threonine 542, glutamine 579, asparagine 586, lysine 595, and lysine 605 each contribute to the dimethylallyl diphosphate site.

The protein in the N-terminal section; belongs to the terpene synthase family. In the C-terminal section; belongs to the FPP/GGPP synthase family. In terms of assembly, hexamer. Mg(2+) is required as a cofactor.

The enzyme catalyses isopentenyl diphosphate + (2E,6E)-farnesyl diphosphate = (2E,6E,10E)-geranylgeranyl diphosphate + diphosphate. It carries out the reaction (2E,6E,10E)-geranylgeranyl diphosphate = variediene + diphosphate. It participates in secondary metabolite biosynthesis; terpenoid biosynthesis. Bifunctional terpene synthase converts DMAPP and IPP, and also GGPP, into variediene as a single product. The C-terminal prenyltransferase domain of AbVS catalyzes formation of GGPP, whereas the N-terminal terpene cyclase domain catalyzes the cyclization of GGPP to variediene. In Aspergillus brasiliensis (strain CBS 101740 / IMI 381727 / IBT 21946), this protein is Variediene synthase.